The primary structure comprises 421 residues: Gamma-glutamyl phosphate reductase (421 aa).

Belongs to the gamma-glutamyl phosphate reductase family.

It is found in the cytoplasm. The enzyme catalyses L-glutamate 5-semialdehyde + phosphate + NADP(+) = L-glutamyl 5-phosphate + NADPH + H(+). It functions in the pathway amino-acid biosynthesis; L-proline biosynthesis; L-glutamate 5-semialdehyde from L-glutamate: step 2/2. Catalyzes the NADPH-dependent reduction of L-glutamate 5-phosphate into L-glutamate 5-semialdehyde and phosphate. The product spontaneously undergoes cyclization to form 1-pyrroline-5-carboxylate. This Brucella suis biovar 1 (strain 1330) protein is Gamma-glutamyl phosphate reductase.